We begin with the raw amino-acid sequence, 839 residues long: Autophagy-related protein 9A (839 aa).

A disordered region spans residues 1 to 21; it reads MAQFDTEYQRLEASYSDSPPG. N-acetylalanine is present on alanine 2. The Cytoplasmic portion of the chain corresponds to 2-61; the sequence is AQFDTEYQRLEASYSDSPPGEEDLLVHVPEGSKSPWHHIENLDLFFSRVYNLHQKNGFTC. Positions 8-11 match the Tyrosine-based sorting signal motif; the sequence is YQRL. A phosphoserine mark is found at serine 14, serine 16, and serine 18. The chain crosses the membrane as a helical span at residues 62–84; it reads MLIGEIFELMQFLFVVAFTTFLV. The Lumenal segment spans residues 85–128; that stretch reads SCVDYDILFANKMVNHSLHPTEPVKVTLPDAFLPAQVCSARIQE. Residue asparagine 99 is glycosylated (N-linked (GlcNAc...) asparagine). The chain crosses the membrane as a helical span at residues 129 to 154; sequence NGSLITILVIAGVFWVHRLIKFIYNI. Over 155 to 290 the chain is Cytoplasmic; sequence CCYWEIHSFY…ELAQRLSNRI (136 aa). An intramembrane segment occupies 291-301; the sequence is LWIGIANFLLC. Residues 302–319 lie on the Cytoplasmic side of the membrane; that stretch reads PLILIWQILYAFFSYAEV. An intramembrane segment occupies 320–328; the sequence is LKREPGALG. The Cytoplasmic segment spans residues 329–371; the sequence is ARCWSLYGRCYLRHFNELEHELQSRLNRGYKPASKYMNCFLSP. Residues 372 to 397 traverse the membrane as a helical segment; it reads LLTLLAKNCAFFAGSILAVLIALTIY. Residues 398-406 are Lumenal-facing; it reads DEDVLAVEH. Residues 407–424 traverse the membrane as a helical segment; that stretch reads VLTTVTLLGVTVTVCRSF. Residues 425–470 lie on the Cytoplasmic side of the membrane; sequence IPDQHMVFCPEQLLRVILAHIHYMPDHWQGNAHRSQTRDEFAQLFQ. The stretch at 471 to 480 is an intramembrane region; that stretch reads YKAVFILEEL. Topologically, residues 481–483 are cytoplasmic; that stretch reads LSP. Residues 484-492 lie within the membrane without spanning it; the sequence is IVTPLILIF. Topologically, residues 493–839 are cytoplasmic; sequence CLRPRALEII…DELPPQVHKV (347 aa). Residues serine 656, serine 735, serine 738, serine 741, and serine 828 each carry the phosphoserine modification. Disordered stretches follow at residues 656 to 688 and 719 to 839; these read SPLQPGQAPTGRAPSTMTGSGVDARTASSGSSV and QQAQ…VHKV. Over residues 724–736 the composition is skewed to basic and acidic residues; the sequence is EPERHVWHRRESD. Acidic residues-rich tracts occupy residues 737 to 747 and 823 to 832; these read ESGESAPEEGG and VPEEGSEDEL.

The protein belongs to the ATG9 family. In terms of assembly, homotrimer; forms a homotrimer with a central pore that forms a path between the two membrane leaflets. Interacts (via cytoplasmic its C-terminus) with ATG2A. Interacts with SUPT20H. Interacts (via the tyrosine-based sorting signal motif) with AP4M1; promoting association with the AP-4 complex. Interacts with ARFIP1 and ARFIP2. Interacts with PI4K2A and PI4KB. Interacts with ATG4A; the interaction is direct and promotes ATG9A trafficking. In terms of processing, ufmylated in a DDRGK1 dependent manner.

It localises to the preautophagosomal structure membrane. The protein resides in the cytoplasmic vesicle. Its subcellular location is the autophagosome membrane. The protein localises to the golgi apparatus. It is found in the trans-Golgi network membrane. It localises to the late endosome membrane. The protein resides in the recycling endosome membrane. Its subcellular location is the endoplasmic reticulum membrane. The protein localises to the mitochondrion membrane. It carries out the reaction a 1,2-diacyl-sn-glycero-3-phosphocholine(in) = a 1,2-diacyl-sn-glycero-3-phosphocholine(out). It catalyses the reaction a 1,2-diacyl-sn-glycero-3-phospho-L-serine(in) = a 1,2-diacyl-sn-glycero-3-phospho-L-serine(out). The catalysed reaction is a 1,2-diacyl-sn-glycero-3-phosphoethanolamine(in) = a 1,2-diacyl-sn-glycero-3-phosphoethanolamine(out). Its function is as follows. Phospholipid scramblase involved in autophagy by mediating autophagosomal membrane expansion. Cycles between the preautophagosomal structure/phagophore assembly site (PAS) and the cytoplasmic vesicle pool and supplies membrane for the growing autophagosome. Lipid scramblase activity plays a key role in preautophagosomal structure/phagophore assembly by distributing the phospholipids that arrive through ATG2 (ATG2A or ATG2B) from the cytoplasmic to the luminal leaflet of the bilayer, thereby driving autophagosomal membrane expansion. Also required to supply phosphatidylinositol 4-phosphate to the autophagosome initiation site by recruiting the phosphatidylinositol 4-kinase beta (PI4KB) in a process dependent on ARFIP2, but not ARFIP1. In addition to autophagy, also plays a role in necrotic cell death. The polypeptide is Autophagy-related protein 9A (Bos taurus (Bovine)).